Reading from the N-terminus, the 198-residue chain is Neutrophil gelatinase-associated lipocalin (198 aa).

The signal sequence occupies residues Met1–Ala20. Residue Gln21 is modified to Pyrrolidone carboxylic acid. Tyr72 to Thr74 is an a carboxymycobactin binding site. Residue Asn85 is glycosylated (N-linked (GlcNAc...) asparagine). Cysteines 96 and 195 form a disulfide. Tyr126 lines the enterobactin pocket. A carboxymycobactin is bound by residues Lys145, Lys154, and Tyr158. Lys154 provides a ligand contact to enterobactin.

It belongs to the calycin superfamily. Lipocalin family. As to quaternary structure, monomer. Homodimer; disulfide-linked. Heterodimer; disulfide-linked with MMP9. In terms of tissue distribution, detected in the ureteric bud in embryonic kidney (at protein level).

The protein resides in the secreted. Its subcellular location is the cytoplasmic granule lumen. The protein localises to the cytoplasmic vesicle lumen. In terms of biological role, iron-trafficking protein involved in multiple processes such as apoptosis, innate immunity and renal development. Binds iron through association with 2,3-dihydroxybenzoic acid (2,3-DHBA), a siderophore that shares structural similarities with bacterial enterobactin, and delivers or removes iron from the cell, depending on the context. Iron-bound form (holo-24p3) is internalized following binding to the SLC22A17 (24p3R) receptor, leading to release of iron and subsequent increase of intracellular iron concentration. In contrast, association of the iron-free form (apo-24p3) with the SLC22A17 (24p3R) receptor is followed by association with an intracellular siderophore, iron chelation and iron transfer to the extracellular medium, thereby reducing intracellular iron concentration. Involved in apoptosis due to interleukin-3 (IL3) deprivation: iron-loaded form increases intracellular iron concentration without promoting apoptosis, while iron-free form decreases intracellular iron levels, inducing expression of the proapoptotic protein BCL2L11/BIM, resulting in apoptosis. Involved in innate immunity; limits bacterial proliferation by sequestering iron bound to microbial siderophores, such as enterobactin. Can also bind siderophores from M.tuberculosis. The sequence is that of Neutrophil gelatinase-associated lipocalin (Lcn2) from Rattus norvegicus (Rat).